The chain runs to 232 residues: Orotate phosphoribosyltransferase (232 aa).

5-phospho-alpha-D-ribose 1-diphosphate contacts are provided by residues Arg107, Lys108, Lys111, His113, and 133–141; that span reads EDLTTAGGS. An orotate-binding site is contributed by Thr137.

It belongs to the purine/pyrimidine phosphoribosyltransferase family. PyrE subfamily. As to quaternary structure, homodimer. Mg(2+) is required as a cofactor.

The enzyme catalyses orotidine 5'-phosphate + diphosphate = orotate + 5-phospho-alpha-D-ribose 1-diphosphate. It functions in the pathway pyrimidine metabolism; UMP biosynthesis via de novo pathway; UMP from orotate: step 1/2. Functionally, catalyzes the transfer of a ribosyl phosphate group from 5-phosphoribose 1-diphosphate to orotate, leading to the formation of orotidine monophosphate (OMP). This Sinorhizobium fredii (strain NBRC 101917 / NGR234) protein is Orotate phosphoribosyltransferase.